Here is a 360-residue protein sequence, read N- to C-terminus: Photosystem II protein D1 1 (360 aa).

3 helical membrane-spanning segments follow: residues 29 to 46, 118 to 133, and 142 to 156; these read YVGW…AATV, HFLI…QWEL, and WICV…SATA. Residue His-118 coordinates chlorophyll a. Position 126 (Tyr-126) interacts with pheophytin a. Residues Asp-170 and Glu-189 each contribute to the [CaMn4O5] cluster site. A helical membrane pass occupies residues 197–218; that stretch reads FHMLGVAGVFGGSLFSAMHGSL. Residue His-198 participates in chlorophyll a binding. A quinone is bound by residues His-215 and 264-265; that span reads SF. His-215 is a binding site for Fe cation. His-272 is a binding site for Fe cation. A helical membrane pass occupies residues 274-288; it reads FLAAWPVIGIWFTAL. His-332, Glu-333, Asp-342, and Ala-344 together coordinate [CaMn4O5] cluster. The propeptide occupies 345 to 360; it reads AGEVAPVALTAPAING.

It belongs to the reaction center PufL/M/PsbA/D family. PSII is composed of 1 copy each of membrane proteins PsbA, PsbB, PsbC, PsbD, PsbE, PsbF, PsbH, PsbI, PsbJ, PsbK, PsbL, PsbM, PsbT, PsbX, PsbY, PsbZ, Psb30/Ycf12, peripheral proteins PsbO, CyanoQ (PsbQ), PsbU, PsbV and a large number of cofactors. It forms dimeric complexes. The D1/D2 heterodimer binds P680, chlorophylls that are the primary electron donor of PSII, and subsequent electron acceptors. It shares a non-heme iron and each subunit binds pheophytin, quinone, additional chlorophylls, carotenoids and lipids. D1 provides most of the ligands for the Mn4-Ca-O5 cluster of the oxygen-evolving complex (OEC). There is also a Cl(-1) ion associated with D1 and D2, which is required for oxygen evolution. The PSII complex binds additional chlorophylls, carotenoids and specific lipids. serves as cofactor. In terms of processing, tyr-161 forms a radical intermediate that is referred to as redox-active TyrZ, YZ or Y-Z. C-terminally processed by CtpA; processing is essential to allow assembly of the oxygen-evolving complex and thus photosynthetic growth.

Its subcellular location is the cellular thylakoid membrane. It catalyses the reaction 2 a plastoquinone + 4 hnu + 2 H2O = 2 a plastoquinol + O2. In terms of biological role, photosystem II (PSII) is a light-driven water:plastoquinone oxidoreductase that uses light energy to abstract electrons from H(2)O, generating O(2) and a proton gradient subsequently used for ATP formation. It consists of a core antenna complex that captures photons, and an electron transfer chain that converts photonic excitation into a charge separation. The D1/D2 (PsbA/PsbD) reaction center heterodimer binds P680, the primary electron donor of PSII as well as several subsequent electron acceptors. This Nostoc sp. (strain PCC 7120 / SAG 25.82 / UTEX 2576) protein is Photosystem II protein D1 1.